A 333-amino-acid chain; its full sequence is Protein FAM170A (333 aa).

3 disordered regions span residues 1–45 (MKRR…GVGE), 73–107 (LQDSSKPRSPLDQVPEGEATTAPSQQASSSCPSYK), and 143–214 (ETSE…AKTP). Positions 10-29 (LEIEESKEAGISKSQEDISH) are enriched in basic and acidic residues. The span at 92–105 (TTAPSQQASSSCPS) shows a compositional bias: low complexity. Positions 143–156 (ETSESLEKQPRMEE) are enriched in basic and acidic residues. Over residues 170–179 (SDVSTRNLLS) the composition is skewed to polar residues. The span at 185–196 (GEEKEHEEKPES) shows a compositional bias: basic and acidic residues. Thr213 carries the post-translational modification Phosphothreonine. The segment at 224 to 248 (FRCMACCRVFATMESLQEHVQYGIR) adopts a C2H2-type; degenerate zinc-finger fold. The segment at 267–333 (MESESTQEEE…RKDHCDNSGS (67 aa)) is disordered. The segment covering 271–281 (STQEEEEDHTE) has biased composition (acidic residues). The segment covering 282–293 (ETEKPKEEKAEE) has biased composition (basic and acidic residues). Position 308 is a phosphoserine (Ser308).

The protein belongs to the FAM170 family. Testis-specific.

It is found in the nucleus. Its function is as follows. Acts as a nuclear transcription factor that positively regulates the expression of heat shock genes. Binds to heat shock promoter elements (HSE). The sequence is that of Protein FAM170A (Fam170a) from Mus musculus (Mouse).